The chain runs to 208 residues: High frequency lysogenization protein HflD homolog (208 aa).

Residues 91-125 are a coiled coil; that stretch reads LMVLERKLNANKQAMNQLGERLGQLERQLAHFDLE.

The protein belongs to the HflD family.

The protein localises to the cytoplasm. It localises to the cell inner membrane. The chain is High frequency lysogenization protein HflD homolog from Serratia proteamaculans (strain 568).